We begin with the raw amino-acid sequence, 786 residues long: Cas scaffolding protein family member 4 (786 aa).

In terms of domain architecture, SH3 spans 11–73 (PKALLARALY…PANRLQILTE (63 aa)). Phosphoserine occurs at positions 200 and 249. The interval 262-295 (SFAEESRPHALPSSSSTFYNPPSGRSRSLTPQLN) is disordered. Residues 273-295 (PSSSSTFYNPPSGRSRSLTPQLN) are compositionally biased toward polar residues. Residue Ser305 is modified to Phosphoserine. Disordered regions lie at residues 361–429 (QAGK…SEES) and 612–670 (IQPP…ERKP). The span at 364–373 (KELEKAKEVS) shows a compositional bias: basic and acidic residues. Over residues 374 to 391 (ENSAGHNSSWFSRRTTSP) the composition is skewed to polar residues. Ser376 and Ser390 each carry phosphoserine. Positions 399–427 (SGSSSDSRASIVSSCSTTSTDDSSSSSSE) are enriched in low complexity. Residues 630 to 642 (KQREDEHSSELLK) are compositionally biased toward basic and acidic residues.

This sequence belongs to the CAS family. As to quaternary structure, interacts (via SH3 domain) with PTK2/FAK1 (via C-terminus). Phosphorylated on tyrosines by SRC. Expressed abundantly in lung and spleen. Also highly expressed in ovarian and leukemia cell lines.

The protein resides in the cytoplasm. It localises to the cytoskeleton. Its subcellular location is the cell junction. The protein localises to the focal adhesion. Its function is as follows. Docking protein that plays a role in tyrosine kinase-based signaling related to cell adhesion and cell spreading. Regulates PTK2/FAK1 activity, focal adhesion integrity, and cell spreading. This is Cas scaffolding protein family member 4 (CASS4) from Homo sapiens (Human).